The sequence spans 826 residues: Glycerol-3-phosphate acyltransferase 1, mitochondrial (826 aa).

Residues 1 to 87 (MDESALTLGT…FFNPSIPSLG (87 aa)) lie on the Cytoplasmic side of the membrane. The important for mitochondrial localization stretch occupies residues 80–120 (NPSIPSLGLRNVIYINETHTRHRGWLARRLSYVLFIQERDV). An intramembrane segment occupies 88 to 118 (LRNVIYINETHTRHRGWLARRLSYVLFIQER). Topologically, residues 119 to 826 (DVHKGMFATN…LEYILSFVVL (708 aa)) are cytoplasmic. The HXXXXD motif motif lies at 230–235 (HRSHID). Positions 278, 279, 288, 293, and 328 each coordinate CoA. Phosphoserine is present on S380. R462 contributes to the CoA binding site. A phosphoserine mark is found at S686 and S693. N6-acetyllysine is present on residues K778 and K782.

It belongs to the GPAT/DAPAT family.

Its subcellular location is the mitochondrion outer membrane. The catalysed reaction is sn-glycerol 3-phosphate + an acyl-CoA = a 1-acyl-sn-glycero-3-phosphate + CoA. It catalyses the reaction (9Z,12Z)-octadecadienoyl-CoA + sn-glycerol 3-phosphate = 1-(9Z,12Z)-octadecadienoyl-sn-glycero-3-phosphate + CoA. It carries out the reaction sn-glycerol 3-phosphate + (9Z)-octadecenoyl-CoA = 1-(9Z-octadecenoyl)-sn-glycero-3-phosphate + CoA. The enzyme catalyses sn-glycerol 3-phosphate + octadecanoyl-CoA = 1-octadecanoyl-sn-glycero-3-phosphate + CoA. The catalysed reaction is sn-glycerol 3-phosphate + hexadecanoyl-CoA = 1-hexadecanoyl-sn-glycero-3-phosphate + CoA. It catalyses the reaction dodecanoyl-CoA + sn-glycerol 3-phosphate = 1-dodecanoyl-sn-glycerol 3-phosphate + CoA. It carries out the reaction 1-acyl-sn-glycero-3-phospho-(1'-sn-glycerol) + an acyl-CoA = a 1,2-diacyl-sn-glycero-3-phospho-(1'-sn-glycerol) + CoA. The protein operates within phospholipid metabolism; CDP-diacylglycerol biosynthesis; CDP-diacylglycerol from sn-glycerol 3-phosphate: step 1/3. Functionally, mitochondrial membrane protein that catalyzes the essential first step of biosynthesis of glycerolipids such as triglycerides, phosphatidic acids and lysophosphatidic acids. Esterifies acyl-group from acyl-coenzyme A (acyl-CoA) to the sn-1 position of glycerol-3-phosphate, to produce lysophosphatidic acid. Has a narrow hydrophobic binding cleft that selects for a linear acyl chain. Catalytic activity is higher for substrates with a 16-carbon acyl chain. In Sus scrofa (Pig), this protein is Glycerol-3-phosphate acyltransferase 1, mitochondrial.